A 60-amino-acid chain; its full sequence is Metallothionein B (60 aa).

Residues 1–28 form a beta region; that stretch reads MDPCDCSKSGTCNCGGSCTCTNCSCTTC. Residues C4, C6, C12, C14, C18, C20, C23, C25, C28, C32, C33, C35, C36, C40, C43, C47, C49, C54, C58, and C59 each coordinate a divalent metal cation. Residues 29–60 form an alpha region; sequence KKSCCPCCPSGCTKCASGCVCKGKTCDTSCCQ.

This sequence belongs to the metallothionein superfamily. Type 1 family.

Its function is as follows. Metallothioneins have a high content of cysteine residues that bind various heavy metals. This Dicentrarchus labrax (European seabass) protein is Metallothionein B (mtb).